A 360-amino-acid chain; its full sequence is Protein RecA (360 aa).

64 to 71 (GHESSGKT) is a binding site for ATP. Positions 333 to 360 (QEQVQPEPKSKQSKSKQASEQATQDELI) are disordered.

It belongs to the RecA family.

The protein localises to the cytoplasm. Its function is as follows. Can catalyze the hydrolysis of ATP in the presence of single-stranded DNA, the ATP-dependent uptake of single-stranded DNA by duplex DNA, and the ATP-dependent hybridization of homologous single-stranded DNAs. It interacts with LexA causing its activation and leading to its autocatalytic cleavage. The chain is Protein RecA from Francisella philomiragia subsp. philomiragia (strain ATCC 25017 / CCUG 19701 / FSC 153 / O#319-036).